The primary structure comprises 470 residues: O-acyltransferase pboC (470 aa).

Residues histidine 149 and aspartate 386 each act as proton acceptor in the active site.

The protein belongs to the plant acyltransferase family. As to quaternary structure, monomer.

The protein operates within secondary metabolite biosynthesis. In terms of biological role, O-acetyltransferase; part of the gene cluster that mediates the biosynthesis of protubonine B, a hydroxylated and diacetylated cyclo-L-Trp-L-Leu derivative. Within the pathway, pboC catalyzes the acetylation of protubonine D at the hydroxy group to produce protubonine C. The first step of the protubonine B synthesis is performed by the nonribosomal peptide synthetase pboA that catalyzes the formation of cyclo-L-Trp-L-Leu by condensing L-Leu with L-Trp. The flavin-dependent monooxygenase pboD is responsible for hydroxylation at C-3 of the indole ring and subsequent formation of the pyrrolidine ring, leadind to protubonine D. Protubonine D is further diacetylated by two acetyltransferases, pboB and pboC, to form the final product protubonine B via protubonine C. This is O-acyltransferase pboC from Aspergillus ustus.